The sequence spans 159 residues: Cytochrome b6-f complex subunit 4 (159 aa).

The next 3 membrane-spanning stretches (helical) occupy residues 35 to 55, 93 to 113, and 127 to 147; these read ILIF…LAVL, LLGV…PFIE, and ATAV…GAMI.

The protein belongs to the cytochrome b family. PetD subfamily. The 4 large subunits of the cytochrome b6-f complex are cytochrome b6, subunit IV (17 kDa polypeptide, PetD), cytochrome f and the Rieske protein, while the 4 small subunits are PetG, PetL, PetM and PetN. The complex functions as a dimer.

It is found in the cell inner membrane. Functionally, component of the cytochrome b6-f complex, which mediates electron transfer between photosystem II (PSII) and photosystem I (PSI), cyclic electron flow around PSI, and state transitions. In Gloeobacter violaceus (strain ATCC 29082 / PCC 7421), this protein is Cytochrome b6-f complex subunit 4.